Here is a 200-residue protein sequence, read N- to C-terminus: GTP cyclohydrolase-2 (200 aa).

GTP is bound at residue 52–56 (RIHSE). 3 residues coordinate Zn(2+): cysteine 57, cysteine 68, and cysteine 70. GTP is bound by residues glutamine 73, 94–96 (EGR), and threonine 116. Aspartate 128 serves as the catalytic Proton acceptor. Arginine 130 serves as the catalytic Nucleophile. Residues threonine 151 and lysine 156 each contribute to the GTP site.

Belongs to the GTP cyclohydrolase II family. The cofactor is Zn(2+).

The enzyme catalyses GTP + 4 H2O = 2,5-diamino-6-hydroxy-4-(5-phosphoribosylamino)-pyrimidine + formate + 2 phosphate + 3 H(+). It functions in the pathway cofactor biosynthesis; riboflavin biosynthesis; 5-amino-6-(D-ribitylamino)uracil from GTP: step 1/4. In terms of biological role, catalyzes the conversion of GTP to 2,5-diamino-6-ribosylamino-4(3H)-pyrimidinone 5'-phosphate (DARP), formate and pyrophosphate. This is GTP cyclohydrolase-2 from Psychromonas ingrahamii (strain DSM 17664 / CCUG 51855 / 37).